A 335-amino-acid chain; its full sequence is F420-dependent glucose-6-phosphate dehydrogenase 1 (335 aa).

Asp38 contributes to the coenzyme F420-(gamma-Glu)n binding site. The active-site Proton donor is His39. Coenzyme F420-(gamma-Glu)n contacts are provided by residues Thr75 and 106–107; that span reads TG. Glu108 (proton acceptor) is an active-site residue. Coenzyme F420-(gamma-Glu)n contacts are provided by residues Asn111, 176 to 177, and 179 to 180; these read GG and VV. Substrate is bound by residues Thr194, Lys197, Lys258, and Arg282.

The protein belongs to the F420-dependent glucose-6-phosphate dehydrogenase family. Homodimer.

The catalysed reaction is oxidized coenzyme F420-(gamma-L-Glu)(n) + D-glucose 6-phosphate + H(+) = 6-phospho-D-glucono-1,5-lactone + reduced coenzyme F420-(gamma-L-Glu)(n). Functionally, catalyzes the coenzyme F420-dependent oxidation of glucose 6-phosphate (G6P) to 6-phosphogluconolactone. The chain is F420-dependent glucose-6-phosphate dehydrogenase 1 from Rhodococcus jostii (strain RHA1).